The following is a 268-amino-acid chain: Embryonic abundant protein VF30.1 (268 aa).

Residues 1 to 25 (MEFAHLTVLSLFCLAFVGITATSSG) form the signal peptide. Positions 68–259 (LFFEHDLHPG…GNKAAAWVPN (192 aa)) constitute a BURP domain. A glycan (N-linked (GlcNAc...) asparagine) is linked at Asn259.

In terms of tissue distribution, seed.

The protein localises to the secreted. The protein is Embryonic abundant protein VF30.1 of Vicia faba (Broad bean).